A 359-amino-acid polypeptide reads, in one-letter code: ATP-dependent kinase YFH7 (359 aa).

31-39 (GPPGSGKST) is an ATP binding site.

Belongs to the YFH7 family.

In terms of biological role, ATP-dependent kinase that could be involved in endoplasmic reticulum membrane assembly. This chain is ATP-dependent kinase YFH7 (YFH7), found in Vanderwaltozyma polyspora (strain ATCC 22028 / DSM 70294 / BCRC 21397 / CBS 2163 / NBRC 10782 / NRRL Y-8283 / UCD 57-17) (Kluyveromyces polysporus).